Consider the following 203-residue polypeptide: Urease accessory protein UreE (203 aa).

The span at 170–190 (EHHGHSHSRSHDHDHDHDHQH) shows a compositional bias: basic and acidic residues. Residues 170-203 (EHHGHSHSRSHDHDHDHDHQHGPSCSHGHHHGHR) are disordered.

This sequence belongs to the UreE family.

The protein localises to the cytoplasm. Involved in urease metallocenter assembly. Binds nickel. Probably functions as a nickel donor during metallocenter assembly. The protein is Urease accessory protein UreE of Burkholderia pseudomallei (strain 1710b).